The following is a 66-amino-acid chain: Large ribosomal subunit protein bL33c (66 aa).

It belongs to the bacterial ribosomal protein bL33 family.

The protein localises to the plastid. The protein resides in the chloroplast. The protein is Large ribosomal subunit protein bL33c of Platanus occidentalis (Sycamore).